The sequence spans 40 residues: MADTTGRIPLWLIGTVTGIPVIGSIGIFFYGSYSGLGSSL.

The helical transmembrane segment at 8–28 threads the bilayer; that stretch reads IPLWLIGTVTGIPVIGSIGIF.

Belongs to the PsbJ family. As to quaternary structure, PSII is composed of 1 copy each of membrane proteins PsbA, PsbB, PsbC, PsbD, PsbE, PsbF, PsbH, PsbI, PsbJ, PsbK, PsbL, PsbM, PsbT, PsbX, PsbY, PsbZ, Psb30/Ycf12, at least 3 peripheral proteins of the oxygen-evolving complex and a large number of cofactors. It forms dimeric complexes.

It is found in the plastid. The protein localises to the chloroplast thylakoid membrane. One of the components of the core complex of photosystem II (PSII). PSII is a light-driven water:plastoquinone oxidoreductase that uses light energy to abstract electrons from H(2)O, generating O(2) and a proton gradient subsequently used for ATP formation. It consists of a core antenna complex that captures photons, and an electron transfer chain that converts photonic excitation into a charge separation. This Chloranthus spicatus (Chulantree) protein is Photosystem II reaction center protein J.